Here is an 830-residue protein sequence, read N- to C-terminus: Phenylalanine--tRNA ligase beta subunit (830 aa).

A tRNA-binding domain is found at 39–158 (GQSLDGVVVG…DDTPVGTPFP (120 aa)). The region spanning 417–492 (PAEKTIALRP…RLHGYDQIPE (76 aa)) is the B5 domain. Residues Asp470, Asp476, Glu479, and Glu480 each contribute to the Mg(2+) site. A disordered region spans residues 490–510 (IPEPERVPVPSRTPEQPPEET). The FDX-ACB domain maps to 736–828 (SRFPVVDRDL…LAENHGARLR (93 aa)).

It belongs to the phenylalanyl-tRNA synthetase beta subunit family. Type 1 subfamily. In terms of assembly, tetramer of two alpha and two beta subunits. The cofactor is Mg(2+).

Its subcellular location is the cytoplasm. It carries out the reaction tRNA(Phe) + L-phenylalanine + ATP = L-phenylalanyl-tRNA(Phe) + AMP + diphosphate + H(+). This chain is Phenylalanine--tRNA ligase beta subunit, found in Salinibacter ruber (strain DSM 13855 / M31).